The primary structure comprises 735 residues: Phosphoribosylformylglycinamidine synthase subunit PurL (735 aa).

The active site involves His-49. ATP-binding residues include Tyr-52 and Lys-91. Glu-93 contacts Mg(2+). Residues 94–97 and Arg-116 each bind substrate; that span reads SHNH. His-95 (proton acceptor) is an active-site residue. Residue Asp-117 participates in Mg(2+) binding. Gln-240 provides a ligand contact to substrate. Residue Asp-268 coordinates Mg(2+). 312 to 314 contributes to the substrate binding site; that stretch reads ESQ. ATP is bound by residues Asp-493 and Gly-530. Asn-531 provides a ligand contact to Mg(2+). Ser-533 is a substrate binding site.

This sequence belongs to the FGAMS family. In terms of assembly, monomer. Part of the FGAM synthase complex composed of 1 PurL, 1 PurQ and 2 PurS subunits.

The protein resides in the cytoplasm. It catalyses the reaction N(2)-formyl-N(1)-(5-phospho-beta-D-ribosyl)glycinamide + L-glutamine + ATP + H2O = 2-formamido-N(1)-(5-O-phospho-beta-D-ribosyl)acetamidine + L-glutamate + ADP + phosphate + H(+). Its pathway is purine metabolism; IMP biosynthesis via de novo pathway; 5-amino-1-(5-phospho-D-ribosyl)imidazole from N(2)-formyl-N(1)-(5-phospho-D-ribosyl)glycinamide: step 1/2. Part of the phosphoribosylformylglycinamidine synthase complex involved in the purines biosynthetic pathway. Catalyzes the ATP-dependent conversion of formylglycinamide ribonucleotide (FGAR) and glutamine to yield formylglycinamidine ribonucleotide (FGAM) and glutamate. The FGAM synthase complex is composed of three subunits. PurQ produces an ammonia molecule by converting glutamine to glutamate. PurL transfers the ammonia molecule to FGAR to form FGAM in an ATP-dependent manner. PurS interacts with PurQ and PurL and is thought to assist in the transfer of the ammonia molecule from PurQ to PurL. The protein is Phosphoribosylformylglycinamidine synthase subunit PurL of Azorhizobium caulinodans (strain ATCC 43989 / DSM 5975 / JCM 20966 / LMG 6465 / NBRC 14845 / NCIMB 13405 / ORS 571).